The following is an 82-amino-acid chain: Small ribosomal subunit protein bS16 (82 aa).

This sequence belongs to the bacterial ribosomal protein bS16 family.

This chain is Small ribosomal subunit protein bS16, found in Klebsiella pneumoniae subsp. pneumoniae (strain ATCC 700721 / MGH 78578).